Reading from the N-terminus, the 467-residue chain is Argininosuccinate lyase (467 aa).

3 residues coordinate 2-(N(omega)-L-arginino)succinate: Ser-27, Asn-114, and Thr-159. The active-site Proton acceptor is the His-160. Ser-281 functions as the Proton donor in the catalytic mechanism. 2-(N(omega)-L-arginino)succinate-binding residues include Asn-289, Tyr-321, Gln-326, and Lys-329.

Belongs to the lyase 1 family. Argininosuccinate lyase subfamily. Homotetramer.

The enzyme catalyses 2-(N(omega)-L-arginino)succinate = fumarate + L-arginine. Its pathway is amino-acid biosynthesis; L-arginine biosynthesis; L-arginine from L-ornithine and carbamoyl phosphate: step 3/3. The protein operates within nitrogen metabolism; urea cycle; L-arginine and fumarate from (N(omega)-L-arginino)succinate: step 1/1. The sequence is that of Argininosuccinate lyase (ASL) from Aquarana catesbeiana (American bullfrog).